The primary structure comprises 199 residues: uncharacterized protein (199 aa).

The N-terminal stretch at 1-23 (MKPGCTLFFLLCSALTVTTEAHA) is a signal peptide.

This is an uncharacterized protein from Escherichia coli (strain K12).